Reading from the N-terminus, the 1194-residue chain is Phosphatidylinositol-3,5-bisphosphate 3-phosphatase MTMR3 (1194 aa).

Residue Ser4 is modified to Phosphoserine. One can recognise a Myotubularin phosphatase domain in the interval 151-572; the sequence is EHVTSRFKNE…RNLMLWSAVY (422 aa). The a 1,2-diacyl-sn-glycero-3-phospho-(1D-myo-inositol-3,5-bisphosphate) site is built by Asn322, Asn347, and Ile348. The a 1,2-diacyl-sn-glycero-3-phospho-(1D-myo-inositol-3-phosphate) site is built by Asn322, Asn347, and Ile348. Residue Cys409 is the Phosphocysteine intermediate of the active site. A 1,2-diacyl-sn-glycero-3-phospho-(1D-myo-inositol-3,5-bisphosphate) contacts are provided by Ser410, Asp411, Gly412, Trp413, Asp414, Arg415, Lys451, and Arg455. Positions 410, 411, 412, 413, 414, and 415 each coordinate a 1,2-diacyl-sn-glycero-3-phospho-(1D-myo-inositol-3-phosphate). An a 1,2-diacyl-sn-glycero-3-phospho-(1D-myo-inositol-3-phosphate)-binding site is contributed by Arg455. The disordered stretch occupies residues 583 to 609; it reads DDSCAPYPAPGTSPDEPPLSRLPKTRS. Residues 589–599 are compositionally biased toward pro residues; sequence YPAPGTSPDEP. Phosphoserine occurs at positions 609, 629, 643, and 647. Basic and acidic residues predominate over residues 693–724; that stretch reads TKEESGVEEPTHREHTEVPEVKEEAPLAKESR. Disordered regions lie at residues 693 to 731, 852 to 871, and 876 to 897; these read TKEE…QGSG, ESGP…RFSG, and PIAP…HRTS. The residue at position 725 (Thr725) is a Phosphothreonine. At Ser904 the chain carries Phosphoserine. Disordered stretches follow at residues 932 to 971 and 988 to 1017; these read NKAS…HQLS and KWLN…DGMP. A compositionally biased stretch (polar residues) spans 991–1006; the sequence is NSHSGRPSTTNSPEQP. A coiled-coil region spans residues 1025–1058; it reads QRLRQIESGHQQEVETLKKQVQELKSRLESQYLT. Ser1060 bears the Phosphoserine mark. The FYVE-type zinc finger occupies 1115-1175; sequence DHLAAHCYAC…VCKSCYSSLH (61 aa). Residues Cys1121, Cys1124, Cys1137, Cys1140, Cys1145, Cys1148, Cys1167, and Cys1170 each contribute to the Zn(2+) site.

The protein belongs to the protein-tyrosine phosphatase family. Non-receptor class myotubularin subfamily. Forms heterodimers with MTMR4 that recruit both CEP55 and PLK1; occurs during early mitosis, regulates the phosphorylation of CEP55 by PLK1 and its recruitment to the midbody where it mediates cell abscission.

The protein localises to the cytoplasm. It localises to the cytosol. It is found in the membrane. It catalyses the reaction a 1,2-diacyl-sn-glycero-3-phospho-(1D-myo-inositol-3,5-bisphosphate) + H2O = a 1,2-diacyl-sn-glycero-3-phospho-(1D-myo-inositol-5-phosphate) + phosphate. The catalysed reaction is a 1,2-diacyl-sn-glycero-3-phospho-(1D-myo-inositol-3-phosphate) + H2O = a 1,2-diacyl-sn-glycero-3-phospho-(1D-myo-inositol) + phosphate. The enzyme catalyses 1,2-dihexadecanoyl-sn-glycero-3-phospho-(1D-myo-inositol-3-phosphate) + H2O = 1,2-dihexadecanoyl-sn-glycero-3-phospho-(1D-myo-inositol) + phosphate. It carries out the reaction 1,2-dioctanoyl-sn-glycero-3-phospho-(1-D-myo-inositol-3-phosphate) + H2O = 1,2-dioctanoyl-sn-glycero-3-phospho-(1D-myo-inositol) + phosphate. It catalyses the reaction 1,2-dihexadecanoyl-sn-glycero-3-phospho-(1D-myo-inositol-3,5-phosphate) + H2O = 1,2-dihexadecanoyl-sn-glycero-3-phospho-(1D-myo-inositol-5-phosphate) + phosphate. Functionally, lipid phosphatase that specifically dephosphorylates the D-3 position of phosphatidylinositol 3-phosphate and phosphatidylinositol 3,5-bisphosphate, generating phosphatidylinositol and phosphatidylinositol 5-phosphate. Decreases the levels of phosphatidylinositol 3-phosphate, a phospholipid found in cell membranes where it acts as key regulator of both cell signaling and intracellular membrane traffic. Could also have a molecular sequestering/adapter activity and regulate biological processes independently of its phosphatase activity. It includes the regulation of midbody abscission during mitotic cytokinesis. The polypeptide is Phosphatidylinositol-3,5-bisphosphate 3-phosphatase MTMR3 (Rattus norvegicus (Rat)).